Reading from the N-terminus, the 306-residue chain is MSDRKRKGNDAPNSLSNRDTVELPDDLSLSDSDSDEPLESFGRKIEDLSSSSEEEGETRQQVQSVLQENPSFRLTGGSSSFCDRSRDIFAQLDSAAKLTSKDLGEDNILDGTLARPAPPSPPHAVQNKCGVGQELTKKQPPGKKLPDYLAHPERWTHYSLEDIDETSDKKNSQVAHEYIRELQDSKRSQKAALETFTPAFNQDHGSSNENKIVFAKPKSKDQSGSRADHAKKEEVGLQHLDDRVEADEGEALQQSSSWPNKEKKRKWGVTKEEDDTVAPSAVFTSSKRVNRKNFRKTPDDNDGDKE.

Disordered regions lie at residues 1–81 (MSDR…SSSF), 109–128 (LDGT…VQNK), and 182–306 (LQDS…GDKE). A compositionally biased stretch (polar residues) spans 59–81 (RQQVQSVLQENPSFRLTGGSSSF). The segment covering 198–210 (PAFNQDHGSSNEN) has biased composition (polar residues). Composition is skewed to basic and acidic residues over residues 218–243 (KSKD…LDDR) and 296–306 (KTPDDNDGDKE).

This sequence belongs to the TSSC4 family. Interacts in a RNA-independent manner with distinct U5 snRNP-containing complexes, the mono-U5 snRNP and the post-splicing U5 snRNP-PRPF19 complex.

The protein resides in the nucleus. Its subcellular location is the cytoplasm. Its function is as follows. Protein associated with the U5 snRNP, during its maturation and its post-splicing recycling and which is required for spliceosomal tri-snRNP complex assembly in the nucleus. Has a molecular sequestering activity and transiently hinders SNRNP200 binding sites for constitutive splicing factors that intervene later during the assembly of the spliceosome and splicing. Together with its molecular sequestering activity, may also function as a molecular adapter and placeholder, coordinating the assembly of the U5 snRNP and its association with the U4/U6 di-snRNP. This Danio rerio (Zebrafish) protein is U5 small nuclear ribonucleoprotein TSSC4 (tssc4).